A 105-amino-acid chain; its full sequence is Flexible cuticle protein 12 (105 aa).

The first 16 residues, 1-16 (MKSFVVVALLVAVAAA), serve as a signal peptide directing secretion. In terms of domain architecture, Chitin-binding type R&amp;R spans 37-105 (VEGFQYGYET…KPVGAHIPVA (69 aa)).

This Hyalophora cecropia (Cecropia moth) protein is Flexible cuticle protein 12 (CP12).